We begin with the raw amino-acid sequence, 241 residues long: Peroxisomal membrane protein 11C (241 aa).

The Cytoplasmic segment spans residues 1 to 122 (MALLNRLASA…ADAKVLRVDS (122 aa)). Residues 123–149 (AWWWTLNTALWTLSLLLGAVKALWTML) form a helical membrane-spanning segment. Residues 150 to 211 (KLRQKLRSPT…GVLWAGRFPP (62 aa)) lie on the Lumenal side of the membrane. The chain crosses the membrane as a helical span at residues 212–227 (WLVGLMGTISSILSTC). Over 228 to 241 (QAVRAGRQAEADSP) the chain is Cytoplasmic.

This sequence belongs to the peroxin-11 family. As to quaternary structure, homodimer. Heterodimer with either PEX11A or PEX11B. Interacts with FIS1. As to expression, expressed in liver and at much lower levels in heart, kidney and testis.

Its subcellular location is the peroxisome membrane. In terms of biological role, promotes membrane protrusion and elongation on the peroxisomal surface. The protein is Peroxisomal membrane protein 11C (Pex11g) of Mus musculus (Mouse).